The sequence spans 263 residues: tRNA uridine(34) hydroxylase (263 aa).

Positions 129–223 (EGREIALLDT…YFEEVGGAHY (95 aa)) constitute a Rhodanese domain. Cys-183 acts as the Cysteine persulfide intermediate in catalysis.

Belongs to the TrhO family.

The enzyme catalyses uridine(34) in tRNA + AH2 + O2 = 5-hydroxyuridine(34) in tRNA + A + H2O. Its function is as follows. Catalyzes oxygen-dependent 5-hydroxyuridine (ho5U) modification at position 34 in tRNAs. The protein is tRNA uridine(34) hydroxylase of Variovorax paradoxus (strain S110).